The chain runs to 368 residues: Peptide chain release factor 2 (368 aa).

An N5-methylglutamine modification is found at Q251.

Belongs to the prokaryotic/mitochondrial release factor family. Post-translationally, methylated by PrmC. Methylation increases the termination efficiency of RF2.

The protein resides in the cytoplasm. Functionally, peptide chain release factor 2 directs the termination of translation in response to the peptide chain termination codons UGA and UAA. The chain is Peptide chain release factor 2 from Streptomyces avermitilis (strain ATCC 31267 / DSM 46492 / JCM 5070 / NBRC 14893 / NCIMB 12804 / NRRL 8165 / MA-4680).